A 692-amino-acid chain; its full sequence is MEARYVDLDKLRNIGIMAHIDAGKTTTTERILYYTGRKHFIGDVDEGNTTTDWMPQEKERGITIQSAATTCFWKGYRINIIDTPGHVDFTAEVERALRVLDGAIAVFDATAGVEPQSETVWRQADKYNVPRIAFMNKMDKVGADFYMAVETLVTKLRANPIPVQMPIGSEKDFQGVIDLIKMKAIYWVSEDGSVYEERDIPEELREEAEMRREEMLEKIAELDEEILEKYLEGEEISEEEIKRVLRKATIENKAVPVLCGAAKANKGIQPLLDAVIDYLPSPLDLPPVKGWRVSDGEVVYRKPDENEPFTALVFKVQVDPYIGKLVYFRVYSGRLEKGSYVYNSTKGQRERISRIVFMHADKREEVDYVRPGDIAAGVGLKVSQTGDTLCDEKEPIILEKIDFPEPVISLAVEPVTKADEEKLVKALLALSEEDPTLQVRVDKETGETIISGMGELHLEIVVDRLKREFGVNVRVGQPQVAYRETIKKSAEAEGKYIRQTGGRGQYGHVILRIEPIPEEEGKNFEFIDKTVGGVIPKEFMPAIEAGIKEAMMAGPLAGYPVVRVRAIVLDGSYHEVDSSEMAFKIAASMAFKEAMKKAQPVLLEPIMKLEITTPEEYMGNIISDLNSRRAKVESLETRGHLKVIVAKVPLSETFGYATVLRSLSQGRASYIMQFSHYQEVPEKIAEKIIKVV.

Residues 9-283 enclose the tr-type G domain; the sequence is DKLRNIGIMA…AVIDYLPSPL (275 aa). GTP contacts are provided by residues 18 to 25, 82 to 86, and 136 to 139; these read AHIDAGKT, DTPGH, and NKMD.

The protein belongs to the TRAFAC class translation factor GTPase superfamily. Classic translation factor GTPase family. EF-G/EF-2 subfamily.

It localises to the cytoplasm. Its function is as follows. Catalyzes the GTP-dependent ribosomal translocation step during translation elongation. During this step, the ribosome changes from the pre-translocational (PRE) to the post-translocational (POST) state as the newly formed A-site-bound peptidyl-tRNA and P-site-bound deacylated tRNA move to the P and E sites, respectively. Catalyzes the coordinated movement of the two tRNA molecules, the mRNA and conformational changes in the ribosome. This is Elongation factor G (fusA) from Thermotoga maritima (strain ATCC 43589 / DSM 3109 / JCM 10099 / NBRC 100826 / MSB8).